Here is a 405-residue protein sequence, read N- to C-terminus: Bifunctional enzyme IspD/IspF (405 aa).

Residues 1–246 (MLQMPSKQPI…KLSASLLPDV (246 aa)) form a 2-C-methyl-D-erythritol 4-phosphate cytidylyltransferase region. Residues 247 to 405 (RTGNGYDVHQ…TATVVYRGRT (159 aa)) form a 2-C-methyl-D-erythritol 2,4-cyclodiphosphate synthase region. A divalent metal cation contacts are provided by aspartate 253 and histidine 255. 4-CDP-2-C-methyl-D-erythritol 2-phosphate-binding positions include 253 to 255 (DVH) and 279 to 280 (HS). Histidine 287 serves as a coordination point for a divalent metal cation. 4-CDP-2-C-methyl-D-erythritol 2-phosphate contacts are provided by residues 301-303 (DIG), 377-380 (TTNE), phenylalanine 384, and arginine 387.

In the N-terminal section; belongs to the IspD/TarI cytidylyltransferase family. IspD subfamily. This sequence in the C-terminal section; belongs to the IspF family. It depends on a divalent metal cation as a cofactor.

It carries out the reaction 2-C-methyl-D-erythritol 4-phosphate + CTP + H(+) = 4-CDP-2-C-methyl-D-erythritol + diphosphate. The enzyme catalyses 4-CDP-2-C-methyl-D-erythritol 2-phosphate = 2-C-methyl-D-erythritol 2,4-cyclic diphosphate + CMP. It participates in isoprenoid biosynthesis; isopentenyl diphosphate biosynthesis via DXP pathway; isopentenyl diphosphate from 1-deoxy-D-xylulose 5-phosphate: step 2/6. It functions in the pathway isoprenoid biosynthesis; isopentenyl diphosphate biosynthesis via DXP pathway; isopentenyl diphosphate from 1-deoxy-D-xylulose 5-phosphate: step 4/6. Its function is as follows. Bifunctional enzyme that catalyzes the formation of 4-diphosphocytidyl-2-C-methyl-D-erythritol from CTP and 2-C-methyl-D-erythritol 4-phosphate (MEP) (IspD), and catalyzes the conversion of 4-diphosphocytidyl-2-C-methyl-D-erythritol 2-phosphate (CDP-ME2P) to 2-C-methyl-D-erythritol 2,4-cyclodiphosphate (ME-CPP) with a corresponding release of cytidine 5-monophosphate (CMP) (IspF). The protein is Bifunctional enzyme IspD/IspF of Rhizobium etli (strain CIAT 652).